Consider the following 278-residue polypeptide: Pantothenate synthetase (278 aa).

M30 to H37 serves as a coordination point for ATP. The active-site Proton donor is H37. Q61 lines the (R)-pantoate pocket. Beta-alanine is bound at residue Q61. G146–D149 is an ATP binding site. Q152 contributes to the (R)-pantoate binding site. ATP is bound by residues I175 and M183–R186.

The protein belongs to the pantothenate synthetase family. As to quaternary structure, homodimer.

The protein localises to the cytoplasm. The catalysed reaction is (R)-pantoate + beta-alanine + ATP = (R)-pantothenate + AMP + diphosphate + H(+). Its pathway is cofactor biosynthesis; (R)-pantothenate biosynthesis; (R)-pantothenate from (R)-pantoate and beta-alanine: step 1/1. Functionally, catalyzes the condensation of pantoate with beta-alanine in an ATP-dependent reaction via a pantoyl-adenylate intermediate. In Ruthia magnifica subsp. Calyptogena magnifica, this protein is Pantothenate synthetase.